The chain runs to 292 residues: Acidic endochitinase (292 aa).

The N-terminal stretch at 1-25 (MAAHKITTTLSIFFLLSSIFRSSDA) is a signal peptide. The 267-residue stretch at 26–292 (AGIAIYWGQN…YSDSIKGSIG (267 aa)) folds into the GH18 domain. 2 disulfide bridges follow: Cys45-Cys92 and Cys75-Cys82. Residue Glu152 is the Proton donor of the active site. Cys180 and Cys209 are oxidised to a cystine.

It belongs to the glycosyl hydrolase 18 family. Chitinase class II subfamily.

Its subcellular location is the secreted. The protein localises to the extracellular space. The enzyme catalyses Random endo-hydrolysis of N-acetyl-beta-D-glucosaminide (1-&gt;4)-beta-linkages in chitin and chitodextrins.. In terms of biological role, this protein functions as a defense against chitin containing fungal pathogens. In Cucumis sativus (Cucumber), this protein is Acidic endochitinase.